The sequence spans 184 residues: Large ribosomal subunit protein uL18 (184 aa).

It belongs to the universal ribosomal protein uL18 family. Part of the 50S ribosomal subunit. Contacts the 5S and 23S rRNAs.

Its function is as follows. This is one of the proteins that bind and probably mediate the attachment of the 5S RNA into the large ribosomal subunit, where it forms part of the central protuberance. This chain is Large ribosomal subunit protein uL18 (rpl18), found in Haloferax volcanii (strain ATCC 29605 / DSM 3757 / JCM 8879 / NBRC 14742 / NCIMB 2012 / VKM B-1768 / DS2) (Halobacterium volcanii).